The primary structure comprises 294 residues: Deubiquitinase OTUD6B (294 aa).

Methionine 1 carries the post-translational modification N-acetylmethionine. The OTU domain maps to 148–285; it reads LEIKQIPSDG…GEHYNSVTRL (138 aa). The cys-loop stretch occupies residues 153-159; that stretch reads IPSDGHC. Residue aspartate 156 is part of the active site. The Nucleophile role is filled by cysteine 159. Positions 220–230 are variable-loop; it reads IVNTAAWGGQL. The segment at 268–278 is his-loop; the sequence is YMRHAYGLGEH. Residue histidine 278 is part of the active site.

In terms of assembly, interacts with the eukaryotic translation initiation factor 4F complex. In terms of tissue distribution, ubiquitously expressed. Expression is observed in several organ systems including the cardiovascular, digestive, central and peripheral nervous and musculoskeletal systems.

The enzyme catalyses Thiol-dependent hydrolysis of ester, thioester, amide, peptide and isopeptide bonds formed by the C-terminal Gly of ubiquitin (a 76-residue protein attached to proteins as an intracellular targeting signal).. Its function is as follows. Deubiquitinating enzyme that may play a role in the ubiquitin-dependent regulation of protein synthesis, downstream of mTORC1. May associate with the protein synthesis initiation complex and modify its ubiquitination to repress translation. May also repress DNA synthesis and modify different cellular targets thereby regulating cell growth and proliferation. May also play a role in proteasome assembly and function. In Mus musculus (Mouse), this protein is Deubiquitinase OTUD6B.